Here is a 546-residue protein sequence, read N- to C-terminus: Chaperonin GroEL (546 aa).

Residues T29–P32, K50, D86–T90, G414, and D492 each bind ATP.

The protein belongs to the chaperonin (HSP60) family. Forms a cylinder of 14 subunits composed of two heptameric rings stacked back-to-back. Interacts with the co-chaperonin GroES.

It is found in the cytoplasm. It catalyses the reaction ATP + H2O + a folded polypeptide = ADP + phosphate + an unfolded polypeptide.. Its function is as follows. Together with its co-chaperonin GroES, plays an essential role in assisting protein folding. The GroEL-GroES system forms a nano-cage that allows encapsulation of the non-native substrate proteins and provides a physical environment optimized to promote and accelerate protein folding. This chain is Chaperonin GroEL, found in Helicobacter pylori (strain Shi470).